Reading from the N-terminus, the 217-residue chain is Phosphoribosylformylglycinamidine synthase subunit PurQ (217 aa).

The region spanning 2 to 217 is the Glutamine amidotransferase type-1 domain; it reads SIGVLVFPGS…GRVLLQGLLS (216 aa). Cys86 serves as the catalytic Nucleophile. Residues His194 and Glu196 contribute to the active site.

As to quaternary structure, part of the FGAM synthase complex composed of 1 PurL, 1 PurQ and 2 PurS subunits.

It localises to the cytoplasm. It carries out the reaction N(2)-formyl-N(1)-(5-phospho-beta-D-ribosyl)glycinamide + L-glutamine + ATP + H2O = 2-formamido-N(1)-(5-O-phospho-beta-D-ribosyl)acetamidine + L-glutamate + ADP + phosphate + H(+). The enzyme catalyses L-glutamine + H2O = L-glutamate + NH4(+). The protein operates within purine metabolism; IMP biosynthesis via de novo pathway; 5-amino-1-(5-phospho-D-ribosyl)imidazole from N(2)-formyl-N(1)-(5-phospho-D-ribosyl)glycinamide: step 1/2. Its function is as follows. Part of the phosphoribosylformylglycinamidine synthase complex involved in the purines biosynthetic pathway. Catalyzes the ATP-dependent conversion of formylglycinamide ribonucleotide (FGAR) and glutamine to yield formylglycinamidine ribonucleotide (FGAM) and glutamate. The FGAM synthase complex is composed of three subunits. PurQ produces an ammonia molecule by converting glutamine to glutamate. PurL transfers the ammonia molecule to FGAR to form FGAM in an ATP-dependent manner. PurS interacts with PurQ and PurL and is thought to assist in the transfer of the ammonia molecule from PurQ to PurL. The sequence is that of Phosphoribosylformylglycinamidine synthase subunit PurQ from Parasynechococcus marenigrum (strain WH8102).